A 258-amino-acid polypeptide reads, in one-letter code: Deoxyribose-phosphate aldolase (258 aa).

The Proton donor/acceptor role is filled by aspartate 102. Lysine 165 (schiff-base intermediate with acetaldehyde) is an active-site residue. Lysine 199 functions as the Proton donor/acceptor in the catalytic mechanism.

This sequence belongs to the DeoC/FbaB aldolase family. DeoC type 2 subfamily.

The protein resides in the cytoplasm. It carries out the reaction 2-deoxy-D-ribose 5-phosphate = D-glyceraldehyde 3-phosphate + acetaldehyde. Its pathway is carbohydrate degradation; 2-deoxy-D-ribose 1-phosphate degradation; D-glyceraldehyde 3-phosphate and acetaldehyde from 2-deoxy-alpha-D-ribose 1-phosphate: step 2/2. Catalyzes a reversible aldol reaction between acetaldehyde and D-glyceraldehyde 3-phosphate to generate 2-deoxy-D-ribose 5-phosphate. This chain is Deoxyribose-phosphate aldolase, found in Aliivibrio salmonicida (strain LFI1238) (Vibrio salmonicida (strain LFI1238)).